Consider the following 428-residue polypeptide: Glutamate-1-semialdehyde 2,1-aminomutase (428 aa).

An N6-(pyridoxal phosphate)lysine modification is found at K267.

This sequence belongs to the class-III pyridoxal-phosphate-dependent aminotransferase family. HemL subfamily. As to quaternary structure, homodimer. Pyridoxal 5'-phosphate is required as a cofactor.

It localises to the cytoplasm. The catalysed reaction is (S)-4-amino-5-oxopentanoate = 5-aminolevulinate. It functions in the pathway porphyrin-containing compound metabolism; protoporphyrin-IX biosynthesis; 5-aminolevulinate from L-glutamyl-tRNA(Glu): step 2/2. The protein is Glutamate-1-semialdehyde 2,1-aminomutase of Desulforapulum autotrophicum (strain ATCC 43914 / DSM 3382 / VKM B-1955 / HRM2) (Desulfobacterium autotrophicum).